Here is a 206-residue protein sequence, read N- to C-terminus: Urease accessory protein UreG (206 aa).

13 to 20 contacts GTP; the sequence is GPVGSGKT.

Belongs to the SIMIBI class G3E GTPase family. UreG subfamily. In terms of assembly, homodimer. UreD, UreF and UreG form a complex that acts as a GTP-hydrolysis-dependent molecular chaperone, activating the urease apoprotein by helping to assemble the nickel containing metallocenter of UreC. The UreE protein probably delivers the nickel.

The protein resides in the cytoplasm. Its function is as follows. Facilitates the functional incorporation of the urease nickel metallocenter. This process requires GTP hydrolysis, probably effectuated by UreG. The chain is Urease accessory protein UreG from Natronomonas pharaonis (strain ATCC 35678 / DSM 2160 / CIP 103997 / JCM 8858 / NBRC 14720 / NCIMB 2260 / Gabara) (Halobacterium pharaonis).